A 208-amino-acid chain; its full sequence is Protein-L-isoaspartate O-methyltransferase (208 aa).

Residue S59 is part of the active site.

The protein belongs to the methyltransferase superfamily. L-isoaspartyl/D-aspartyl protein methyltransferase family.

It is found in the cytoplasm. It catalyses the reaction [protein]-L-isoaspartate + S-adenosyl-L-methionine = [protein]-L-isoaspartate alpha-methyl ester + S-adenosyl-L-homocysteine. In terms of biological role, catalyzes the methyl esterification of L-isoaspartyl residues in peptides and proteins that result from spontaneous decomposition of normal L-aspartyl and L-asparaginyl residues. It plays a role in the repair and/or degradation of damaged proteins. This chain is Protein-L-isoaspartate O-methyltransferase, found in Serratia proteamaculans (strain 568).